Here is a 112-residue protein sequence, read N- to C-terminus: Colipase (112 aa).

The first 17 residues, Met1–Ala17, serve as a signal peptide directing secretion. Positions Ala18–Arg22 are cleaved as a propeptide — enterostatin, activation peptide. Cystine bridges form between Cys34-Cys45, Cys40-Cys56, Cys44-Cys78, Cys66-Cys86, and Cys80-Cys104.

It belongs to the colipase family. As to quaternary structure, forms a 1:1 stoichiometric complex with pancreatic lipase. Expressed by the pancreas.

Its subcellular location is the secreted. In terms of biological role, colipase is a cofactor of pancreatic lipase. It allows the lipase to anchor itself to the lipid-water interface. Without colipase the enzyme is washed off by bile salts, which have an inhibitory effect on the lipase. Its function is as follows. Enterostatin has a biological activity as a satiety signal. The chain is Colipase from Rattus norvegicus (Rat).